The chain runs to 454 residues: Lamina-associated polypeptide 2, isoforms beta/gamma (454 aa).

A nucleoplasmic region spans residues M1–S410. In terms of domain architecture, LEM-like spans L5–R48. 2 disordered regions span residues A47–N117 and L149–S265. Residues N49–D108 are linker. The residue at position 57 (T57) is a Phosphothreonine. Phosphoserine occurs at positions 59, 66, and 67. T74 is modified (phosphothreonine). The span at G78 to R93 shows a compositional bias: low complexity. At S79 the chain carries Phosphoserine. R86 and R88 each carry omega-N-methylarginine. The span at K97–D106 shows a compositional bias: basic and acidic residues. Positions K107–N117 are enriched in acidic residues. One can recognise an LEM domain in the interval D109–G153. The segment at T138 to L243 is NAKAP95-binding N. A Phosphothreonine modification is found at T154. Polar residues predominate over residues E155 to N178. Phosphoserine is present on residues S156 and S159. Phosphothreonine occurs at positions 160 and 164. A phosphoserine mark is found at S166, S168, S177, S180, S184, and S190. Over residues D179 to K203 the composition is skewed to basic and acidic residues. K207 is subject to N6-acetyllysine. T211 is subject to Phosphothreonine. A compositionally biased stretch (polar residues) spans N220–S237. 7 positions are modified to phosphoserine: S222, S224, S250, S254, S265, S292, and S306. The interval T299 to A371 is binds lamins B. The NAKAP95-binding C stretch occupies residues G300–P374. A Phosphothreonine modification is found at T312. S315 is modified (phosphoserine). R320 carries the post-translational modification Citrulline. A phosphoserine mark is found at S362, S378, and S385. Position 389 is an N6-acetyllysine (K389). K401 participates in a covalent cross-link: Glycyl lysine isopeptide (Lys-Gly) (interchain with G-Cter in SUMO2). The residue at position 402 (S402) is a Phosphoserine. Residues I411–M434 traverse the membrane as a helical; Signal-anchor for type II membrane protein segment. Residues E435 to N454 are Lumenal-facing.

It belongs to the LEM family. In terms of assembly, interacts with LMNB1, LMNB2, BANF1, AKAP8L, GMCL and chromosomes. Isoform Zeta interacts with BANF1/BAF and may sequester it in the cytoplasm. Post-translationally, mitosis-specific phosphorylation specifically abolishes its binding to lamin B and chromosomes. In terms of processing, citrullinated by PADI4. As to expression, expressed in many tissues. Most abundant in adult thymus and fetal liver.

The protein resides in the nucleus inner membrane. It localises to the cytoplasm. May help direct the assembly of the nuclear lamina and thereby help maintain the structural organization of the nuclear envelope. Possible receptor for attachment of lamin filaments to the inner nuclear membrane. May be involved in the control of initiation of DNA replication through its interaction with NAKAP95. Its function is as follows. Thymopoietin (TP) and Thymopentin (TP5) may play a role in T-cell development and function. TP5 is an immunomodulating pentapeptide. The protein is Lamina-associated polypeptide 2, isoforms beta/gamma (TMPO) of Homo sapiens (Human).